The following is a 1424-amino-acid chain: MANSYLSSCANVMVERINTSQELVELCKGKSSSALLKRLKVALVTANPVLADADQRAEHVREVKHWLTGIKDAFFQAEDILDELQTEALRRRVVAEAGGLGGLFQNLMAGREAIQKKIEPKMEKVVRLLEHHVKHIEVIGLKEYSETREPQWRQASRSRPDDLPQGRLVGRVEDKLALVNLLLSDDEISIGKPAVISVVGMPGVGKTTLTEIVFNDYRVTEHFEVKMWISAGINFNVFTVTKAVLQDITSSAVNTEDLPSLQIQLKKTLSGKRFLLVLDDFWSESDSEWESFQVAFTDAEEGSKIVLTTRSEIVSTVAKAEKIYQMKLMTNEECWELISRFAFGNISVGSINQELEGIGKRIAEQCKGLPLAARAIASHLRSKPNPDDWYAVSKNFSSYTNSILPVLKLSYDSLPPQLKRCFALCSIFPKGHVFDREELVLLWMAIDLLYQPRSSRRLEDIGNDYLGDLVAQSFFQRLDITMTSFVMHDLMNDLAKAVSGDFCFRLEDDNIPEIPSTTRHFSFSRSQCDASVAFRSICGAEFLRTILPFNSPTSLESLQLTEKVLNPLLNALSGLRILSLSHYQITNLPKSLKGLKLLRYLDLSSTKIKELPEFVCTLCNLQTLLLSNCRDLTSLPKSIAELINLRLLDLVGTPLVEMPPGIKKLRSLQKLSNFVIGRLSGAGLHELKELSHLRGTLRISELQNVAFASEAKDAGLKRKPFLDGLILKWTVKGSGFVPGSFNALACDQKEVLRMLEPHPHLKTFCIESYQGGAFPKWLGDSSFFGITSVTLSSCNLCISLPPVGQLPSLKYLSIEKFNILQKVGLDFFFGENNSRGVPFQSLQILKFYGMPRWDEWICPELEDGIFPCLQKLIIQRCPSLRKKFPEGLPSSTEVTISDCPLRAVSGGENSFRRSLTNIPESPASIPSMSRRELSSPTGNPKSDASTSAQPGFASSSQSNDDNEVTSTSSLSSLPKDRQTEDFDQYETQLGSLPQQFEEPAVISARYSGYISDIPSTLSPYMSRTSLVPDPKNEGSILPGSSSYQYHQYGIKSSVPSPRSSEAIKPSQYDDDETDMEYLKVTDISHLMELPQNLQSLHIDSCDGLTSLPENLTESYPNLHELLIIACHSLESFPGSHPPTTLKTLYIRDCKKLNFTESLQPTRSYSQLEYLFIGSSCSNLVNFPLSLFPKLRSLSIRDCESFKTFSIHAGLGDDRIALESLEIRDCPNLETFPQGGLPTPKLSSMLLSNCKKLQALPEKLFGLTSLLSLFIIKCPEIETIPGGGFPSNLRTLCISLCDKLTPRIEWGLRDLENLRNLEIDGGNEDIESFPEEGLLPKSVFSLRISRFENLKTLNRKGFHDTKAIETMEISGCDKLQISIDEDLPPLSCLRISSCSLLTETFAEVETEFFKVLNIPYVEIDGEIFS.

One can recognise an NB-ARC domain in the interval 152-454; that stretch reads WRQASRSRPD…AIDLLYQPRS (303 aa). 200–207 is a binding site for ATP; it reads GMPGVGKT. LRR repeat units lie at residues 498–523, 552–571, 572–595, 597–618, 620–641, 642–665, and 806–830; these read VSGD…HFSF, PTSL…LLNA, LSGL…LKGL, LLRY…VCTL, NLQT…SIAE, LINL…IKKL, and LPSL…FFFG. Disordered regions lie at residues 911–977 and 1050–1070; these read FRRS…PKDR and IKSS…QYDD. Composition is skewed to polar residues over residues 912-927 and 934-972; these read RRSL…SIPS and SSPT…SLSS. LRR repeat units follow at residues 1090-1114, 1118-1139, 1238-1262, 1264-1286, and 1310-1336; these read PQNL…LTES, LHEL…HPPT, TPKL…LFGL, SLLS…GFPS, and LENL…LLPK.

This sequence belongs to the disease resistance NB-LRR family.

In terms of biological role, potential disease resistance protein. The protein is Putative disease resistance protein At3g14460 of Arabidopsis thaliana (Mouse-ear cress).